The primary structure comprises 168 residues: CDP-archaeol synthase (168 aa).

Transmembrane regions (helical) follow at residues 7–27 (PLES…PVLL), 55–75 (GLAT…SATC), 80–100 (YAAG…GAFI), 109–129 (GAPA…LALY), and 130–150 (AAGY…VIAL).

Belongs to the CDP-archaeol synthase family. Mg(2+) is required as a cofactor.

Its subcellular location is the cell membrane. The catalysed reaction is 2,3-bis-O-(geranylgeranyl)-sn-glycerol 1-phosphate + CTP + H(+) = CDP-2,3-bis-O-(geranylgeranyl)-sn-glycerol + diphosphate. Its pathway is membrane lipid metabolism; glycerophospholipid metabolism. Its function is as follows. Catalyzes the formation of CDP-2,3-bis-(O-geranylgeranyl)-sn-glycerol (CDP-archaeol) from 2,3-bis-(O-geranylgeranyl)-sn-glycerol 1-phosphate (DGGGP) and CTP. This reaction is the third ether-bond-formation step in the biosynthesis of archaeal membrane lipids. This is CDP-archaeol synthase from Hyperthermus butylicus (strain DSM 5456 / JCM 9403 / PLM1-5).